Reading from the N-terminus, the 312-residue chain is Very-long-chain 3-oxoacyl-CoA reductase (312 aa).

Residues 4–24 (ALPAAGFLYWVGAGTVAYLAL) traverse the membrane as a helical segment. Residue 50–79 (GEWAVVTGSTDGIGKSYAEELAKHGMKVVL) coordinates NADP(+). Transmembrane regions (helical) follow at residues 182 to 202 (GAIL…LTIY) and 271 to 291 (GYLI…WIYL). Position 189 (Ser189) interacts with substrate. Residue Tyr202 is the Proton acceptor of the active site. Residues 308–312 (KTKKN) carry the Di-lysine motif motif.

Belongs to the short-chain dehydrogenases/reductases (SDR) family. 17-beta-HSD 3 subfamily. As to quaternary structure, interacts with ELOVL1 and LASS2. Expressed in most tissues tested. Highly expressed in the ovary and mammary. Expressed in platelets.

Its subcellular location is the endoplasmic reticulum membrane. The enzyme catalyses a very-long-chain (3R)-3-hydroxyacyl-CoA + NADP(+) = a very-long-chain 3-oxoacyl-CoA + NADPH + H(+). It catalyses the reaction 17beta-estradiol + NAD(+) = estrone + NADH + H(+). The catalysed reaction is 17beta-estradiol + NADP(+) = estrone + NADPH + H(+). It carries out the reaction 3-oxooctadecanoyl-CoA + NADPH + H(+) = (3R)-hydroxyoctadecanoyl-CoA + NADP(+). The enzyme catalyses (7Z,10Z,13Z,16Z)-3-oxodocosatetraenoyl-CoA + NADPH + H(+) = (3R)-hydroxy-(7Z,10Z,13Z,16Z)-docosatetraenoyl-CoA + NADP(+). It catalyses the reaction 3-oxo-(7Z,10Z,13Z,16Z,19Z)-docosapentaenoyl-CoA + NADPH + H(+) = (3R)-hydroxy-(7Z,10Z,13Z,16Z,19Z)-docosapentaenoyl-CoA + NADP(+). The catalysed reaction is (8Z,11Z,14Z)-3-oxoeicosatrienoyl-CoA + NADPH + H(+) = (3R)-hydroxy-(8Z,11Z,14Z)-eicosatrienoyl-CoA + NADP(+). The protein operates within lipid metabolism; fatty acid biosynthesis. It participates in steroid biosynthesis; estrogen biosynthesis. In terms of biological role, catalyzes the second of the four reactions of the long-chain fatty acids elongation cycle. This endoplasmic reticulum-bound enzymatic process, allows the addition of two carbons to the chain of long- and very long-chain fatty acids/VLCFAs per cycle. This enzyme has a 3-ketoacyl-CoA reductase activity, reducing 3-ketoacyl-CoA to 3-hydroxyacyl-CoA, within each cycle of fatty acid elongation. Thereby, it may participate in the production of VLCFAs of different chain lengths that are involved in multiple biological processes as precursors of membrane lipids and lipid mediators. May also catalyze the transformation of estrone (E1) into estradiol (E2) and play a role in estrogen formation. This is Very-long-chain 3-oxoacyl-CoA reductase from Homo sapiens (Human).